Consider the following 3623-residue polypeptide: Cubilin (3623 aa).

A signal peptide spans 1 to 23 (MMNMSLPFLWSLLTLLIFAEVNG). Residues 24–35 (EAGELELQRQKR) constitute a propeptide, removed in mature form. The interaction with AMN stretch occupies residues 42 to 49 (PRMATERG). The N-linked (GlcNAc...) asparagine glycan is linked to N105. The region spanning 132-168 (DKKVCSSNPCQNGGTCLNLHDSFFCICPPQWKGPLCS) is the EGF-like 1 domain. 9 cysteine pairs are disulfide-bonded: C136/C147, C141/C156, C158/C167, C174/C190, C184/C199, C201/C210, C267/C280, C274/C289, and C292/C303. The EGF-like 2; calcium-binding domain maps to 170-211 (DVNECEIYSGTPLSCQNGGTCVNTMGSYSCHCPPETYGPQCA). In terms of domain architecture, EGF-like 3; calcium-binding spans 263–304 (DRDECSFQPGPCSTLVQCFNTQGSFYCGACPTGWQGNGYICE). The 44-residue stretch at 305–348 (DINECEINNGGCSVAPPVECVNTPGSSHCQACPPGYQGDGRVCT) folds into the EGF-like 4; calcium-binding domain. 2 consecutive EGF-like domains span residues 349 to 385 (LTDI…YTGN) and 395 to 430 (LSNI…VNCT). Cystine bridges form between C353–C366, C360–C376, C399–C409, C404–C418, C420–C429, C436–C447, C441–C456, C458–C467, C474–C500, C527–C549, C590–C616, C643–C665, and C708–C734. N428 carries an N-linked (GlcNAc...) asparagine glycan. An EGF-like 7; calcium-binding domain is found at 432–468 (NINECLSNPCLNGGTCVDGVDSFSCECTRLWTGALCQ). 27 consecutive CUB domains span residues 474-586 (CGES…WETQ), 590-702 (CGGI…YLTS), 708-816 (CGGN…YQVA), 816-928 (ACGD…FSAE), 932-1042 (CGEI…YEAI), 1048-1161 (CLQD…WDGS), 1165-1277 (CGGN…YRQT), 1278-1389 (CENV…WFVY), 1391-1506 (CGGE…WQAV), 1510-1619 (CGGI…FRQA), 1620-1734 (CGGH…VTAS), 1738-1850 (CGGT…FMKI), 1852-1963 (GNDN…WFAV), 1978-2091 (CGGF…FHKS), 2092-2213 (CGGY…YEAK), 2217-2334 (CGGN…YSIA), 2336-2448 (CGGR…FESS), 2452-2565 (CGGD…YTSS), 2570-2687 (CGGS…YSFT), 2689-2801 (CGGI…WNTQ), 2805-2919 (CGGI…FVSR), 2920-3035 (CGSN…YRII), 3037-3150 (CGGV…FRQT), 3157-3274 (CGGY…YTIM), 3278-3393 (CGGT…YQIA), 3395-3507 (CNRD…WTSS), and 3511-3623 (CGGT…TWDS). N482 carries N-linked (GlcNAc...) asparagine glycosylation. Residues N711, N749, N781, and N857 are each glycosylated (N-linked (GlcNAc...) asparagine). 2 cysteine pairs are disulfide-bonded: C869–C891 and C932–C958. The N-linked (GlcNAc...) asparagine glycan is linked to N957. E980 contacts Ca(2+). N-linked (GlcNAc...) asparagine glycosylation occurs at N984. C985 and C1005 form a disulfide bridge. Ca(2+) contacts are provided by D988, D1027, D1029, and L1030. Residues C1048 and C1074 are joined by a disulfide bond. N1092 carries an N-linked (GlcNAc...) asparagine glycan. E1096, D1105, D1146, I1148, and D1149 together coordinate Ca(2+). Cysteines 1165 and 1191 form a disulfide. A glycan (N-linked (GlcNAc...) asparagine) is linked at N1168. E1213 serves as a coordination point for Ca(2+). N-linked (GlcNAc...) asparagine glycosylation occurs at N1217. Residues C1218 and C1240 are joined by a disulfide bond. Ca(2+)-binding residues include D1221, D1262, G1264, and Q1265. C1278 and C1306 are disulfide-bonded. 3 N-linked (GlcNAc...) asparagine glycosylation sites follow: N1285, N1307, and N1319. E1328 serves as a coordination point for Ca(2+). N1332 is a glycosylation site (N-linked (GlcNAc...) asparagine). C1333 and C1351 form a disulfide bridge. Positions 1336, 1373, and 1375 each coordinate Ca(2+). 2 cysteine pairs are disulfide-bonded: C1391/C1417 and C1444/C1466. N-linked (GlcNAc...) asparagine glycosylation occurs at N1500. C1510 and C1536 are disulfide-bonded. N-linked (GlcNAc...) asparagine glycosylation is present at N1551. Intrachain disulfides connect C1563–C1581, C1620–C1647, C1675–C1697, C1738–C1764, and C1791–C1812. A glycan (N-linked (GlcNAc...) asparagine) is linked at N1646. N-linked (GlcNAc...) asparagine glycosylation is found at N1802, N1819, and N1885. Intrachain disulfides connect C1905–C1927, C1978–C2006, and C2032–C2054. N-linked (GlcNAc...) asparagine glycans are attached at residues N2085 and N2117. Disulfide bonds link C2092-C2118 and C2217-C2247. An N-linked (GlcNAc...) asparagine glycan is attached at N2274. Cystine bridges form between C2275–C2297 and C2336–C2363. N2386 and N2400 each carry an N-linked (GlcNAc...) asparagine glycan. 3 cysteine pairs are disulfide-bonded: C2390-C2411, C2452-C2478, and C2505-C2527. 4 N-linked (GlcNAc...) asparagine glycosylation sites follow: N2531, N2581, N2592, and N2610. C2570 and C2599 are joined by a disulfide. Cystine bridges form between C2628/C2649, C2689/C2715, C2742/C2764, C2805/C2831, C2860/C2883, C2920/C2946, and C2977/C2999. N-linked (GlcNAc...) asparagine glycosylation is present at N2813. N-linked (GlcNAc...) asparagine glycans are attached at residues N2923 and N2945. The residue at position 3008 (T3008) is a Phosphothreonine. Disulfide bonds link C3037–C3064 and C3091–C3113. N-linked (GlcNAc...) asparagine glycans are attached at residues N3042, N3103, N3125, and N3165. 2 disulfides stabilise this stretch: C3157-C3185 and C3215-C3237. 4 N-linked (GlcNAc...) asparagine glycosylation sites follow: N3268, N3283, N3290, and N3295. Cystine bridges form between C3278–C3306 and C3332–C3354. N-linked (GlcNAc...) asparagine glycosylation is present at N3357. The cysteines at positions 3395 and 3421 are disulfide-linked. 4 N-linked (GlcNAc...) asparagine glycosylation sites follow: N3430, N3457, N3533, and N3576. 3 disulfide bridges follow: C3448/C3470, C3511/C3537, and C3564/C3586.

In terms of assembly, interacts with AMN. Component of the cubam complex composed of one CUBN trimer and one AMN chain. The cubam complex can dimerize. Interacts with LRP2 in a dual-receptor complex in a calcium-dependent manner. Found in a complex with PID1/PCLI1, LRP1 and CUBNI. Interacts with LRP1 and PID1/PCLI1. Post-translationally, the precursor is cleaved by a trans-Golgi proteinase furin, removing a propeptide. In terms of processing, N-glycosylated. Detected in kidney cortex (at protein level). Expressed in kidney proximal tubule cells, placenta, visceral yolk-sac cells and in absorptive intestinal cells. Expressed in the epithelium of intestine and kidney.

Its subcellular location is the apical cell membrane. It localises to the cell membrane. The protein localises to the membrane. The protein resides in the coated pit. It is found in the endosome. Its subcellular location is the lysosome membrane. Endocytic receptor which plays a role in lipoprotein, vitamin and iron metabolism by facilitating their uptake. Acts together with LRP2 to mediate endocytosis of high-density lipoproteins, GC, hemoglobin, ALB, TF and SCGB1A1. Acts together with AMN to mediate endocytosis of the CBLIF-cobalamin complex. Binds to ALB, MB, Kappa and lambda-light chains, TF, hemoglobin, GC, SCGB1A1, APOA1, high density lipoprotein, and the CBLIF-cobalamin complex. Ligand binding requires calcium. Serves as important transporter in several absorptive epithelia, including intestine, renal proximal tubules and embryonic yolk sac. May play an important role in the development of the peri-implantation embryo through internalization of APOA1 and cholesterol. Binds to LGALS3 at the maternal-fetal interface. The chain is Cubilin (CUBN) from Homo sapiens (Human).